Here is a 505-residue protein sequence, read N- to C-terminus: AAA-ATPase At5g17760 (505 aa).

A helical membrane pass occupies residues 11–27 (TSVFTAYASMAGYMMMI). The interval 136–155 (GGGGGVGGRGGGGGRRGGMD) is disordered. A compositionally biased stretch (gly residues) spans 137–151 (GGGGVGGRGGGGGRR). ATP is bound at residue 260–267 (GPPGTGKS).

The protein belongs to the AAA ATPase family. BCS1 subfamily. The cofactor is Mg(2+).

It localises to the membrane. The enzyme catalyses ATP + H2O = ADP + phosphate + H(+). The polypeptide is AAA-ATPase At5g17760 (Arabidopsis thaliana (Mouse-ear cress)).